We begin with the raw amino-acid sequence, 167 residues long: Ubiquitin-fold modifier-conjugating enzyme 1 (167 aa).

The active-site Glycyl thioester intermediate is the cysteine 116.

It belongs to the ubiquitin-conjugating enzyme family. UFC1 subfamily. In terms of assembly, interacts with UBA5 (via C-terminus). Interacts with UFL1. Interacts with UFM1.

Functionally, E2-like enzyme which specifically catalyzes the second step in ufmylation. Accepts the ubiquitin-like modifier UFM1 from the E1 enzyme UBA5 and forms an intermediate with UFM1 via a thioester linkage. Ufmylation is involved in various processes, such as ribosome recycling, response to DNA damage, interferon response or reticulophagy (also called ER-phagy). In Esox lucius (Northern pike), this protein is Ubiquitin-fold modifier-conjugating enzyme 1.